The primary structure comprises 76 residues: Small ribosomal subunit protein bS18 (76 aa).

It belongs to the bacterial ribosomal protein bS18 family. In terms of assembly, part of the 30S ribosomal subunit. Forms a tight heterodimer with protein bS6.

Its function is as follows. Binds as a heterodimer with protein bS6 to the central domain of the 16S rRNA, where it helps stabilize the platform of the 30S subunit. This is Small ribosomal subunit protein bS18 from Oceanobacillus iheyensis (strain DSM 14371 / CIP 107618 / JCM 11309 / KCTC 3954 / HTE831).